A 397-amino-acid polypeptide reads, in one-letter code: Phosphoglycerate kinase (397 aa).

Substrate is bound by residues aspartate 21–asparagine 23, arginine 36, histidine 59–arginine 62, arginine 119, and arginine 156. Residues lysine 207, glycine 295, glutamate 326, and glycine 353–serine 356 each bind ATP.

The protein belongs to the phosphoglycerate kinase family. In terms of assembly, monomer.

The protein resides in the cytoplasm. The enzyme catalyses (2R)-3-phosphoglycerate + ATP = (2R)-3-phospho-glyceroyl phosphate + ADP. Its pathway is carbohydrate degradation; glycolysis; pyruvate from D-glyceraldehyde 3-phosphate: step 2/5. In Enterococcus faecalis (strain ATCC 700802 / V583), this protein is Phosphoglycerate kinase.